We begin with the raw amino-acid sequence, 215 residues long: uncharacterized protein (215 aa).

Helical transmembrane passes span 3–23 (LLAY…LRSI), 30–50 (ANLL…GLTW), 59–79 (LGLS…LRFW), 87–107 (WGTY…AICV), 122–142 (VSTC…SNIY), and 156–176 (VLFG…LIYV).

The protein belongs to the major facilitator superfamily. Allantoate permease family.

It is found in the membrane. This is an uncharacterized protein from Saccharomyces cerevisiae (strain ATCC 204508 / S288c) (Baker's yeast).